Consider the following 483-residue polypeptide: Glutamyl-tRNA(Gln) amidotransferase subunit A (483 aa).

Active-site charge relay system residues include lysine 76 and serine 151. Serine 175 acts as the Acyl-ester intermediate in catalysis.

The protein belongs to the amidase family. GatA subfamily. As to quaternary structure, heterotrimer of A, B and C subunits.

It catalyses the reaction L-glutamyl-tRNA(Gln) + L-glutamine + ATP + H2O = L-glutaminyl-tRNA(Gln) + L-glutamate + ADP + phosphate + H(+). Its function is as follows. Allows the formation of correctly charged Gln-tRNA(Gln) through the transamidation of misacylated Glu-tRNA(Gln) in organisms which lack glutaminyl-tRNA synthetase. The reaction takes place in the presence of glutamine and ATP through an activated gamma-phospho-Glu-tRNA(Gln). This Pseudomonas savastanoi pv. phaseolicola (strain 1448A / Race 6) (Pseudomonas syringae pv. phaseolicola (strain 1448A / Race 6)) protein is Glutamyl-tRNA(Gln) amidotransferase subunit A.